A 207-amino-acid chain; its full sequence is Guanylate kinase (207 aa).

The region spanning 6–185 (GLLIVLSGPS…AKERIQSIVE (180 aa)) is the Guanylate kinase-like domain. Residue 13–20 (GPSGVGKG) participates in ATP binding.

The protein belongs to the guanylate kinase family.

It localises to the cytoplasm. It catalyses the reaction GMP + ATP = GDP + ADP. Its function is as follows. Essential for recycling GMP and indirectly, cGMP. The polypeptide is Guanylate kinase (Staphylococcus haemolyticus (strain JCSC1435)).